A 249-amino-acid chain; its full sequence is Mannose-binding protein C (249 aa).

The N-terminal stretch at 1–20 (MSLFTSLPFLLLTAVTASCA) is a signal peptide. Residues 43-101 (GINGIPGKDGRDGAKGEKGEPGQGLRGSQGPPGKMGPQGTPGIPGIPGPIGQKGDPGEN) enclose the Collagen-like domain. Residues 43 to 103 (GINGIPGKDG…QKGDPGENMG (61 aa)) are disordered. 4-hydroxyproline is present on Pro48. Basic and acidic residues predominate over residues 50–62 (KDGRDGAKGEKGE). Pro63, Pro74, Pro83, and Pro86 each carry 4-hydroxyproline. Positions 79 to 95 (PQGTPGIPGIPGPIGQK) are enriched in low complexity. The stretch at 113–131 (RATLQSELNQIKNWLIFSL) forms a coiled coil. The 112-residue stretch at 135–246 (VGKKAFFTNG…CSASFLTVCE (112 aa)) folds into the C-type lectin domain. Disulfide bonds link Cys156–Cys245 and Cys223–Cys237.

As to quaternary structure, oligomeric complex of 3 or more homotrimers. Interacts with MASP1 and MASP2. Interacts with MEP1A and MEP1B and may inhibit their catalytic activity. In terms of processing, hydroxylation on proline residues within the sequence motif, GXPG, is most likely to be 4-hydroxy as this fits the requirement for 4-hydroxylation in vertebrates.

The protein resides in the secreted. Calcium-dependent lectin involved in innate immune defense. Binds mannose, fucose and N-acetylglucosamine on different microorganisms and activates the lectin complement pathway. Binds to late apoptotic cells, as well as to apoptotic blebs and to necrotic cells, but not to early apoptotic cells, facilitating their uptake by macrophages. The chain is Mannose-binding protein C (MBL) from Bos taurus (Bovine).